A 442-amino-acid chain; its full sequence is MDASCLFKALLATNWALFLWDQYITFRQYKAHKNAVKRPNEVKELIGEEDYKKARDYKIDNHLFGFFHSWFNQLLLTAQLIGGYYPFLWYATASYPLHVAVFLSINSIIETIIDLPWDLYSTFIIEDAHGFNKQTIGFYFVDKIKKMLVGFALTMPIVYGIEWIIVNGGPYFFVYIWLFVSVVVLLLMTIYPTFIAPLFDKYFPLPDGDLKTKIEQLAASLSYPLTELYVVNGSKRSAHSNAYMYGFWKNKRIVLYDTLLSGAEKEKVHELYVAAGEKIEETENDKKRGMNNDEVVAVLGHELGHWALWHTLINLVITEVNLFFSFAVFGYFYKWEALYQGFGYHDTPPVIGMMLIFQFVLALYNQLASIGMVIHSRSAEFGADEFAANLGHGENLIGALTKLGVDNLSMPINDSLYSWCTHTHPPVVERVAAVRAFQAKNK.

Topologically, residues 1-62 (MDASCLFKAL…KARDYKIDNH (62 aa)) are lumenal. A helical membrane pass occupies residues 63–83 (LFGFFHSWFNQLLLTAQLIGG). Tyr84 is a topological domain (cytoplasmic). Residues 85 to 105 (YPFLWYATASYPLHVAVFLSI) form a helical membrane-spanning segment. Topologically, residues 106–146 (NSIIETIIDLPWDLYSTFIIEDAHGFNKQTIGFYFVDKIKK) are lumenal. The helical transmembrane segment at 147–167 (MLVGFALTMPIVYGIEWIIVN) threads the bilayer. The Cytoplasmic segment spans residues 168–170 (GGP). The chain crosses the membrane as a helical span at residues 171-191 (YFFVYIWLFVSVVVLLLMTIY). At 192–311 (PTFIAPLFDK…ELGHWALWHT (120 aa)) the chain is on the lumenal side. His301 lines the Zn(2+) pocket. Glu302 is a catalytic residue. His305 contributes to the Zn(2+) binding site. The chain crosses the membrane as a helical span at residues 312–332 (LINLVITEVNLFFSFAVFGYF). At 333 to 349 (YKWEALYQGFGYHDTPP) the chain is on the cytoplasmic side. The helical transmembrane segment at 350–370 (VIGMMLIFQFVLALYNQLASI) threads the bilayer. Over 371 to 442 (GMVIHSRSAE…AVRAFQAKNK (72 aa)) the chain is Lumenal. Residue Glu380 participates in Zn(2+) binding. Asp384 functions as the Proton donor in the catalytic mechanism.

It belongs to the peptidase M48A family. It depends on Zn(2+) as a cofactor.

Its subcellular location is the endoplasmic reticulum membrane. The protein localises to the membrane. It carries out the reaction Hydrolyzes the peptide bond -P2-(S-farnesyl or geranylgeranyl)C-P1'-P2'-P3'-COOH where P1' and P2' are amino acids with aliphatic side chains and P3' is any C-terminal residue.. Functionally, proteolytically removes the C-terminal three residues of farnesylated proteins. The chain is CAAX prenyl protease 1 homolog from Caenorhabditis elegans.